Reading from the N-terminus, the 951-residue chain is Bifunctional glutamine synthetase adenylyltransferase/adenylyl-removing enzyme (951 aa).

The adenylyl removase stretch occupies residues 1 to 440 (MLPLPSELQI…VFDDLIGDET (440 aa)). The adenylyl transferase stretch occupies residues 449 to 951 (HGLYKSLWQD…WLAANDANVS (503 aa)).

Belongs to the GlnE family. Mg(2+) serves as cofactor.

The catalysed reaction is [glutamine synthetase]-O(4)-(5'-adenylyl)-L-tyrosine + phosphate = [glutamine synthetase]-L-tyrosine + ADP. It catalyses the reaction [glutamine synthetase]-L-tyrosine + ATP = [glutamine synthetase]-O(4)-(5'-adenylyl)-L-tyrosine + diphosphate. Functionally, involved in the regulation of glutamine synthetase GlnA, a key enzyme in the process to assimilate ammonia. When cellular nitrogen levels are high, the C-terminal adenylyl transferase (AT) inactivates GlnA by covalent transfer of an adenylyl group from ATP to specific tyrosine residue of GlnA, thus reducing its activity. Conversely, when nitrogen levels are low, the N-terminal adenylyl removase (AR) activates GlnA by removing the adenylyl group by phosphorolysis, increasing its activity. The regulatory region of GlnE binds the signal transduction protein PII (GlnB) which indicates the nitrogen status of the cell. This Yersinia pestis bv. Antiqua (strain Antiqua) protein is Bifunctional glutamine synthetase adenylyltransferase/adenylyl-removing enzyme.